The sequence spans 696 residues: DNA topoisomerase 6 subunit B (696 aa).

Residues 1 to 36 (MDDDAGDGAASGGTKRKVTAASSSAAAKGKAAGKGK) are disordered. The span at 20–36 (AASSSAAAKGKAAGKGK) shows a compositional bias: low complexity. Residues Asn-88, Asp-187, 208 to 209 (TK), 217 to 224 (GKFGLGAK), and Lys-543 contribute to the ATP site.

It belongs to the TOP6B family. In terms of assembly, homodimer. Heterotetramer of two TOP6A and two TOP6B subunits. Interacts with SPO11-4.

Its subcellular location is the nucleus. The enzyme catalyses ATP-dependent breakage, passage and rejoining of double-stranded DNA.. Its function is as follows. Component of the DNA topoisomerase VI involved in chromatin organization and progression of endoreduplication cycles. Relaxes both positive and negative superturns and exhibits a strong decatenase activity. The B subunit binds ATP. This Oryza sativa subsp. japonica (Rice) protein is DNA topoisomerase 6 subunit B (TOP6B).